The sequence spans 533 residues: GMP synthase [glutamine-hydrolyzing] (533 aa).

The Glutamine amidotransferase type-1 domain occupies 22–215 (RILILDFGSQ…THNVAGCSGT (194 aa)). The active-site Nucleophile is C99. Catalysis depends on residues H189 and E191. The region spanning 216-408 (WTMAGFRELE…LGIPESIVGR (193 aa)) is the GMPS ATP-PPase domain. Residue 243-249 (SGGVDSS) participates in ATP binding.

As to quaternary structure, homodimer.

The enzyme catalyses XMP + L-glutamine + ATP + H2O = GMP + L-glutamate + AMP + diphosphate + 2 H(+). Its pathway is purine metabolism; GMP biosynthesis; GMP from XMP (L-Gln route): step 1/1. Functionally, catalyzes the synthesis of GMP from XMP. This is GMP synthase [glutamine-hydrolyzing] from Gluconobacter oxydans (strain 621H) (Gluconobacter suboxydans).